Here is a 426-residue protein sequence, read N- to C-terminus: Probable imidazolonepropionase (426 aa).

The 4-imidazolone-5-propanoate site is built by Tyr-159 and His-192. Tyr-159 provides a ligand contact to N-formimidoyl-L-glutamate. Residue His-260 participates in Fe(3+) binding. A Zn(2+)-binding site is contributed by His-260. Glu-263 is a 4-imidazolone-5-propanoate binding site. Position 334 (Asp-334) interacts with Fe(3+). Position 334 (Asp-334) interacts with Zn(2+). Asn-336 contributes to the N-formimidoyl-L-glutamate binding site.

This sequence belongs to the metallo-dependent hydrolases superfamily. HutI family. Requires Zn(2+) as cofactor. Fe(3+) serves as cofactor.

The enzyme catalyses 4-imidazolone-5-propanoate + H2O = N-formimidoyl-L-glutamate. It functions in the pathway amino-acid degradation; L-histidine degradation into L-glutamate; N-formimidoyl-L-glutamate from L-histidine: step 3/3. This chain is Probable imidazolonepropionase (AMDHD1), found in Bos taurus (Bovine).